The primary structure comprises 364 residues: Chorismate synthase (364 aa).

Positions 48 and 54 each coordinate NADP(+). Residues 125 to 127 (RSS), 238 to 239 (NA), glycine 278, 293 to 297 (KPTSS), and arginine 319 each bind FMN.

Belongs to the chorismate synthase family. In terms of assembly, homotetramer. FMNH2 is required as a cofactor.

It catalyses the reaction 5-O-(1-carboxyvinyl)-3-phosphoshikimate = chorismate + phosphate. It participates in metabolic intermediate biosynthesis; chorismate biosynthesis; chorismate from D-erythrose 4-phosphate and phosphoenolpyruvate: step 7/7. In terms of biological role, catalyzes the anti-1,4-elimination of the C-3 phosphate and the C-6 proR hydrogen from 5-enolpyruvylshikimate-3-phosphate (EPSP) to yield chorismate, which is the branch point compound that serves as the starting substrate for the three terminal pathways of aromatic amino acid biosynthesis. This reaction introduces a second double bond into the aromatic ring system. The protein is Chorismate synthase of Shewanella loihica (strain ATCC BAA-1088 / PV-4).